A 169-amino-acid chain; its full sequence is ATP synthase subunit b (169 aa).

Residues 11 to 31 traverse the membrane as a helical segment; that stretch reads IPSFIAQIVNFGLLLGLLYLF.

Belongs to the ATPase B chain family. As to quaternary structure, F-type ATPases have 2 components, F(1) - the catalytic core - and F(0) - the membrane proton channel. F(1) has five subunits: alpha(3), beta(3), gamma(1), delta(1), epsilon(1). F(0) has three main subunits: a(1), b(2) and c(10-14). The alpha and beta chains form an alternating ring which encloses part of the gamma chain. F(1) is attached to F(0) by a central stalk formed by the gamma and epsilon chains, while a peripheral stalk is formed by the delta and b chains.

It localises to the cell membrane. Functionally, f(1)F(0) ATP synthase produces ATP from ADP in the presence of a proton or sodium gradient. F-type ATPases consist of two structural domains, F(1) containing the extramembraneous catalytic core and F(0) containing the membrane proton channel, linked together by a central stalk and a peripheral stalk. During catalysis, ATP synthesis in the catalytic domain of F(1) is coupled via a rotary mechanism of the central stalk subunits to proton translocation. Component of the F(0) channel, it forms part of the peripheral stalk, linking F(1) to F(0). The sequence is that of ATP synthase subunit b from Dehalococcoides mccartyi (strain ATCC BAA-2100 / JCM 16839 / KCTC 5957 / BAV1).